The following is a 271-amino-acid chain: 3-methyl-2-oxobutanoate hydroxymethyltransferase (271 aa).

2 residues coordinate Mg(2+): Asp51 and Asp90. 3-methyl-2-oxobutanoate contacts are provided by residues 51 to 52 (DS), Asp90, and Lys118. Glu120 lines the Mg(2+) pocket. Residue Glu186 is the Proton acceptor of the active site.

The protein belongs to the PanB family. As to quaternary structure, homodecamer; pentamer of dimers. Mg(2+) serves as cofactor.

It is found in the cytoplasm. It carries out the reaction 3-methyl-2-oxobutanoate + (6R)-5,10-methylene-5,6,7,8-tetrahydrofolate + H2O = 2-dehydropantoate + (6S)-5,6,7,8-tetrahydrofolate. It participates in cofactor biosynthesis; (R)-pantothenate biosynthesis; (R)-pantoate from 3-methyl-2-oxobutanoate: step 1/2. Functionally, catalyzes the reversible reaction in which hydroxymethyl group from 5,10-methylenetetrahydrofolate is transferred onto alpha-ketoisovalerate to form ketopantoate. The sequence is that of 3-methyl-2-oxobutanoate hydroxymethyltransferase from Xanthomonas campestris pv. campestris (strain 8004).